Reading from the N-terminus, the 271-residue chain is MAGLEVLFASAAPAITCRQDALVCFLHWEVVTHGYFGLGVGDQPGPNDKKSELLPAGWNNNKDLYVLRYEYKDGSRKLLVKAITVESSMILNVLEYGSQQVADLTLNLDDYIDAEHLGDFHRTYKNSEELRSRIVSGIITPIHEQWEKANVSSPHREFPPATAREVDPLRIPPHHPHTSRQPPWCDPLGPFVVGGEDLDPFGPRRGGMIVDPLRSGFPRALIDPSSGLPNRLPPGAVPPGARFDPFGPIGTSPPGPNPDHLPPPGYDDMYL.

The residue at position 2 (Ala2) is an N-acetylalanine. Positions 2–150 (AGLEVLFASA…PIHEQWEKAN (149 aa)) are important for homodimerization and interaction with FBXO7. Residue Ser153 is modified to Phosphoserine. Residue Arg205 is modified to Omega-N-methylarginine. Arg219 carries the asymmetric dimethylarginine modification. The disordered stretch occupies residues 222-271 (IDPSSGLPNRLPPGAVPPGARFDPFGPIGTSPPGPNPDHLPPPGYDDMYL). Omega-N-methylarginine is present on Arg231. Residues 251–265 (TSPPGPNPDHLPPPG) are compositionally biased toward pro residues. Ser252 carries the phosphoserine modification.

Belongs to the proteasome inhibitor PI31 family. Monomer and homodimer. Interacts with FBXO7. Interacts with the 20S proteasome.

Its subcellular location is the cytoplasm. The protein localises to the endoplasmic reticulum. Plays an important role in control of proteasome function. Inhibits the hydrolysis of protein and peptide substrates by the 20S proteasome. Also inhibits the activation of the proteasome by the proteasome regulatory proteins PA700 and PA28. The polypeptide is Proteasome inhibitor PI31 subunit (PSMF1) (Homo sapiens (Human)).